A 447-amino-acid polypeptide reads, in one-letter code: Gamma-glutamyl phosphate reductase (447 aa).

Belongs to the gamma-glutamyl phosphate reductase family.

The protein resides in the cytoplasm. The enzyme catalyses L-glutamate 5-semialdehyde + phosphate + NADP(+) = L-glutamyl 5-phosphate + NADPH + H(+). It participates in amino-acid biosynthesis; L-proline biosynthesis; L-glutamate 5-semialdehyde from L-glutamate: step 2/2. In terms of biological role, catalyzes the NADPH-dependent reduction of L-glutamate 5-phosphate into L-glutamate 5-semialdehyde and phosphate. The product spontaneously undergoes cyclization to form 1-pyrroline-5-carboxylate. This chain is Gamma-glutamyl phosphate reductase, found in Methanosarcina mazei (strain ATCC BAA-159 / DSM 3647 / Goe1 / Go1 / JCM 11833 / OCM 88) (Methanosarcina frisia).